Here is a 295-residue protein sequence, read N- to C-terminus: CCAAT-binding factor complex subunit php4 (295 aa).

Positions M1–A19 are enriched in low complexity. Residues M1–E69 are disordered. Positions R73 to S111 form a coiled coil. The Nuclear export signal motif lies at L93–L100. The segment at T108 to E130 is disordered.

In terms of assembly, component of tha CCAAT-binding complex composed of at least php2, php3, php4 and php5. Interacts with crm1 and grx4.

Its subcellular location is the cytoplasm. It localises to the nucleus. The protein resides in the cytoskeleton. It is found in the spindle pole. Component of the transcription regulatory CCAAT-binding complex. Required for the reprogramming of the cell for iron use. Down-regulates pcl1, sdh4, and isa1 underlow-iron conditions. The protein is CCAAT-binding factor complex subunit php4 (php4) of Schizosaccharomyces pombe (strain 972 / ATCC 24843) (Fission yeast).